Here is a 346-residue protein sequence, read N- to C-terminus: Phosphoribosylformylglycinamidine cyclo-ligase (346 aa).

This sequence belongs to the AIR synthase family.

The protein resides in the cytoplasm. The enzyme catalyses 2-formamido-N(1)-(5-O-phospho-beta-D-ribosyl)acetamidine + ATP = 5-amino-1-(5-phospho-beta-D-ribosyl)imidazole + ADP + phosphate + H(+). The protein operates within purine metabolism; IMP biosynthesis via de novo pathway; 5-amino-1-(5-phospho-D-ribosyl)imidazole from N(2)-formyl-N(1)-(5-phospho-D-ribosyl)glycinamide: step 2/2. The polypeptide is Phosphoribosylformylglycinamidine cyclo-ligase (Bacillus thuringiensis subsp. konkukian (strain 97-27)).